A 205-amino-acid polypeptide reads, in one-letter code: Holliday junction branch migration complex subunit RuvA (205 aa).

The segment at 1 to 64 is domain I; the sequence is MIGRLRGIVL…EDAQLLYGFN (64 aa). Residues 65-143 form a domain II region; that stretch reads DKQERALFRE…GLNGDLFNQS (79 aa). Residues 144 to 156 form a flexible linker region; that stretch reads SDINLPATAKQTT. A domain III region spans residues 157–205; the sequence is SDADSEAEAAAALVSLGYKPQEASRMVSKIAKPGADCETLIREALRAVL.

This sequence belongs to the RuvA family. As to quaternary structure, homotetramer. Forms an RuvA(8)-RuvB(12)-Holliday junction (HJ) complex. HJ DNA is sandwiched between 2 RuvA tetramers; dsDNA enters through RuvA and exits via RuvB. An RuvB hexamer assembles on each DNA strand where it exits the tetramer. Each RuvB hexamer is contacted by two RuvA subunits (via domain III) on 2 adjacent RuvB subunits; this complex drives branch migration. In the full resolvosome a probable DNA-RuvA(4)-RuvB(12)-RuvC(2) complex forms which resolves the HJ.

It is found in the cytoplasm. The RuvA-RuvB-RuvC complex processes Holliday junction (HJ) DNA during genetic recombination and DNA repair, while the RuvA-RuvB complex plays an important role in the rescue of blocked DNA replication forks via replication fork reversal (RFR). RuvA specifically binds to HJ cruciform DNA, conferring on it an open structure. The RuvB hexamer acts as an ATP-dependent pump, pulling dsDNA into and through the RuvAB complex. HJ branch migration allows RuvC to scan DNA until it finds its consensus sequence, where it cleaves and resolves the cruciform DNA. In Photorhabdus laumondii subsp. laumondii (strain DSM 15139 / CIP 105565 / TT01) (Photorhabdus luminescens subsp. laumondii), this protein is Holliday junction branch migration complex subunit RuvA.